The chain runs to 357 residues: UDP-N-acetylglucosamine--N-acetylmuramyl-(pentapeptide) pyrophosphoryl-undecaprenol N-acetylglucosamine transferase (357 aa).

UDP-N-acetyl-alpha-D-glucosamine is bound by residues 15 to 17, Asn124, Arg165, Ser194, and Gln288; that span reads TGG.

It belongs to the glycosyltransferase 28 family. MurG subfamily.

Its subcellular location is the cell inner membrane. The enzyme catalyses di-trans,octa-cis-undecaprenyl diphospho-N-acetyl-alpha-D-muramoyl-L-alanyl-D-glutamyl-meso-2,6-diaminopimeloyl-D-alanyl-D-alanine + UDP-N-acetyl-alpha-D-glucosamine = di-trans,octa-cis-undecaprenyl diphospho-[N-acetyl-alpha-D-glucosaminyl-(1-&gt;4)]-N-acetyl-alpha-D-muramoyl-L-alanyl-D-glutamyl-meso-2,6-diaminopimeloyl-D-alanyl-D-alanine + UDP + H(+). It functions in the pathway cell wall biogenesis; peptidoglycan biosynthesis. In terms of biological role, cell wall formation. Catalyzes the transfer of a GlcNAc subunit on undecaprenyl-pyrophosphoryl-MurNAc-pentapeptide (lipid intermediate I) to form undecaprenyl-pyrophosphoryl-MurNAc-(pentapeptide)GlcNAc (lipid intermediate II). The sequence is that of UDP-N-acetylglucosamine--N-acetylmuramyl-(pentapeptide) pyrophosphoryl-undecaprenol N-acetylglucosamine transferase from Nostoc punctiforme (strain ATCC 29133 / PCC 73102).